Consider the following 231-residue polypeptide: Protein OPG061 (231 aa).

It belongs to the orthopoxvirus OPG058 family.

The protein resides in the host nucleus. Its subcellular location is the host nucleolus. The polypeptide is Protein OPG061 (OPG061) (Homo sapiens (Human)).